The following is a 483-amino-acid chain: Proline--tRNA ligase (483 aa).

Belongs to the class-II aminoacyl-tRNA synthetase family. ProS type 3 subfamily. As to quaternary structure, homodimer.

Its subcellular location is the cytoplasm. It catalyses the reaction tRNA(Pro) + L-proline + ATP = L-prolyl-tRNA(Pro) + AMP + diphosphate. Catalyzes the attachment of proline to tRNA(Pro) in a two-step reaction: proline is first activated by ATP to form Pro-AMP and then transferred to the acceptor end of tRNA(Pro). The sequence is that of Proline--tRNA ligase from Mycoplasma genitalium (strain ATCC 33530 / DSM 19775 / NCTC 10195 / G37) (Mycoplasmoides genitalium).